A 1242-amino-acid chain; its full sequence is ATP-dependent RNA helicase DHX8 (1242 aa).

Disordered stretches follow at residues 75–283 (RPSR…DDPE) and 354–449 (SMKE…GLLP). Composition is skewed to basic and acidic residues over residues 87-97 (TVGDKKEDKKS), 113-141 (YSKKEESDDDEKVKAKPEKHSETHKKTDM), and 180-196 (RDRDTKRRSRSREDRHS). Composition is skewed to basic residues over residues 197–222 (DRRRSRSRDKERRRRSRSRDNRRRSR) and 232–252 (DRRHKSSSSRDHHERRRRSRS). Positions 253–269 (RSTERRDRRDRSRDCSE) are enriched in basic and acidic residues. The 72-residue stretch at 285–356 (GKIYSGKIAN…TGQKVSLSMK (72 aa)) folds into the S1 motif domain. Residues 388-399 (FSSSTSMLNLQG) are compositionally biased toward polar residues. Residues 439–449 (PDFDEETGLLP) show a composition bias toward acidic residues. The Helicase ATP-binding domain occupies 596 to 759 (IKAVTDNQIL…FFKAPIFTIP (164 aa)). 609 to 616 (GETGSGKT) is an ATP binding site. The short motif at 706–709 (DEAH) is the DEAH box element. The region spanning 777 to 957 (YLDASLITVM…TTVLQLKTMG (181 aa)) is the Helicase C-terminal domain.

Belongs to the DEAD box helicase family. DEAH subfamily. DDX8/PRP22 sub-subfamily. As to quaternary structure, identified in the spliceosome C complex.

It localises to the nucleus. The catalysed reaction is ATP + H2O = ADP + phosphate + H(+). Involved in pre-mRNA splicing as component of the spliceosome. Facilitates nuclear export of spliced mRNA by releasing the RNA from the spliceosome. Before and after egg-chamber formation, required for nurse-cell chromatin dispersal (NCCD) probably by playing a role in spliceosome localization to chromatin/interchromatin spaces. In Drosophila melanogaster (Fruit fly), this protein is ATP-dependent RNA helicase DHX8.